The sequence spans 744 residues: MAADKPADQGAEKHEGAGQSSGVTDQEKELSASALQAFTSGNYDACLQHLACLQDINKDDYKIILNTAVAEFFKNNQTTTDNLRQTLNQLKNQVHSAVEEMDGLDDVENSMLYYNQAVILYHLRQYTEAISVGEKLYQFIEPFEEKFAQAVCFLLVDLYILTHQAEKALHLLAVLEKMISQGSGGKNGKNETGNNSSKDGSNPKAESAALIEAAKSKIHQYKVRGYIQMKSLKACKREIKSVMNTAGNSAPSLFLKSNFEYLRGNYRKAVKLLNSSNIAEHPGFMKTGECLRCMFWNNLGCIHFAMSKHNLGIFYFKKALQENDNVCAQLSAGGTDPGKKFSGRPMCTLLTNKRYELLYNCGIQLLHVGRPLAAFECLIEAVQVYHANPRLWLRLAECCIAANKGTSEQETKGLPTKKGIVQSIVGQGYHRKIVLASQSIQNTVYNDGQSSAIPVASVEFAAICLRNALLLLPEEQQDPKQENGSKSSSQLGGNTESSESSETCSSKSHDGDKFIPAPPSSPLRKQELENLKCSILACSAYVALALGDNLMALNHADQLLQQPKLSGSLKFLGHLYAAEALISLDRISDAITHLNPENVTDVSLGISSNEQDQGSDKGENEAMESSGKRAPQCYPSSVNSARTVMLFNLGSAYCLRSEYDKARKCLHQAASMIHPKEVPPEAILLAVYLELQNGNTQLALQMIKRNQLLPAVKAHSDVRKKTVFQPVHPIQPIQMPAFTTVQRK.

A compositionally biased stretch (basic and acidic residues) spans M1–G16. Residues M1–Q26 are disordered. N-acetylalanine is present on A2. Residues F73 to V107 adopt a coiled-coil conformation. Disordered regions lie at residues G182–P203, E475–S521, and V602–Y634. The span at G484–T495 shows a compositional bias: polar residues. A compositionally biased stretch (low complexity) spans E496–S506. Residues V602–D612 show a composition bias toward polar residues.

It belongs to the CNOT10 family. As to quaternary structure, component of the CCR4-NOT complex; distinct complexes seem to exist that differ in the participation of probably mutually exclusive catalytic subunits. CNOT10 and CNOT11 form a subcomplex docked to the CNOT1 scaffold.

The protein localises to the cytoplasm. It is found in the nucleus. Functionally, component of the CCR4-NOT complex which is one of the major cellular mRNA deadenylases and is linked to various cellular processes including bulk mRNA degradation, miRNA-mediated repression, translational repression during translational initiation and general transcription regulation. Additional complex functions may be a consequence of its influence on mRNA expression. Is not required for association of CNOT7 to the CCR4-NOT complex. The chain is CCR4-NOT transcription complex subunit 10 (Cnot10) from Mus musculus (Mouse).